Reading from the N-terminus, the 647-residue chain is RAF proto-oncogene serine/threonine-protein kinase (647 aa).

The residue at position 43 (Ser43) is a Phosphoserine. The 76-residue stretch at 56-131 (NTIRVFLPNK…IGEELQVDFL (76 aa)) folds into the RBD domain. A Phorbol-ester/DAG-type zinc finger spans residues 138–184 (THNFARKTFLKLAFCDICQKFLLNGFRCQTCGYKFHEHCSTKVPTMC). 2 disordered regions span residues 236–269 (HVFT…VSTT) and 284–334 (HSES…RPRG). A compositionally biased stretch (polar residues) spans 239–269 (TFNTSNPSSEGTLSQRQRSTSTPNVHMVSTT). Phosphoserine is present on Ser259. Thr268 carries the post-translational modification Phosphothreonine; by autocatalysis. Residues 286 to 297 (ESASPSALSGSP) are compositionally biased toward low complexity. Residues 298–309 (NNMSPTGWSQPK) are compositionally biased toward polar residues. Phosphoserine is present on Ser338. In terms of domain architecture, Protein kinase spans 349-609 (VMLSTRIGSG…PQILSSIELL (261 aa)). ATP is bound by residues 355-363 (IGSGSFGTV) and Lys375. Residue Asp468 is the Proton acceptor of the active site. Phosphoserine occurs at positions 499 and 621.

Belongs to the protein kinase superfamily. TKL Ser/Thr protein kinase family. RAF subfamily. Post-translationally, phosphorylation at Ser-259 inactivates kinase activity. Dephosphorylation of Ser-259 by a complex containing protein phosphatase 1 relieves inactivation, leading to stimulate RAF1 activity. Isoform 1 was present in all tissues tested: skeletal muscle, intestine, brain, gizzard, heart, lung, kidney, bone marrow, spleen and bursa of Fabricius. Isoform 2 was only detected in brain, heart and skeletal muscle. In brain and heart isoform 1 is more abundant than isoform 2. In skeletal muscle isoform 2 is more abundant than isoform 1.

The protein localises to the cytoplasm. The protein resides in the cell membrane. The catalysed reaction is L-seryl-[protein] + ATP = O-phospho-L-seryl-[protein] + ADP + H(+). The enzyme catalyses L-threonyl-[protein] + ATP = O-phospho-L-threonyl-[protein] + ADP + H(+). In terms of biological role, serine/threonine-protein kinase that acts as a regulatory link between the membrane-associated Ras GTPases and the MAPK/ERK cascade, and this critical regulatory link functions as a switch determining cell fate decisions. RAF1 activation initiates a mitogen-activated protein kinase (MAPK) cascade that comprises a sequential phosphorylation of the dual-specific MAPK kinases (MAP2K1/MEK1 and MAP2K2/MEK2) and the extracellular signal-regulated kinases (MAPK3/ERK1 and MAPK1/ERK2). The sequence is that of RAF proto-oncogene serine/threonine-protein kinase (RAF1) from Gallus gallus (Chicken).